The sequence spans 335 residues: Capsular polysaccharide phosphotransferase WcwK (335 aa).

Belongs to the stealth family.

The chain is Capsular polysaccharide phosphotransferase WcwK (wcwK) from Streptococcus pneumoniae.